The primary structure comprises 690 residues: Eukaryotic translation initiation factor 3 subunit B (690 aa).

Residues 1–11 (MAKKKSEEHSG) show a composition bias toward basic and acidic residues. Positions 1–36 (MAKKKSEEHSGADANDSDYTEEPNFDDPPNFVDNIS) are disordered. Acidic residues predominate over residues 15–25 (NDSDYTEEPNF). The region spanning 57-141 (SVVVVDNMPK…YTFAVNLFTD (85 aa)) is the RRM domain. 5 WD repeats span residues 207-246 (TRER…KIQK), 292-331 (GDGM…LLDL), 334-369 (IKIP…TLME), 442-484 (EIRE…KPSL), and 530-575 (PDHF…IRRT). Positions 614-645 (QKDRLRLTRASKELLEKRSQLRETFMEYRNKR) form a coiled coil.

It belongs to the eIF-3 subunit B family. As to quaternary structure, component of the eukaryotic translation initiation factor 3 (eIF-3) complex. The eIF-3 complex interacts with pix. Interacts with mxt.

Its subcellular location is the cytoplasm. RNA-binding component of the eukaryotic translation initiation factor 3 (eIF-3) complex, which is involved in protein synthesis of a specialized repertoire of mRNAs and, together with other initiation factors, stimulates binding of mRNA and methionyl-tRNAi to the 40S ribosome. The eIF-3 complex specifically targets and initiates translation of a subset of mRNAs involved in cell proliferation. This Drosophila virilis (Fruit fly) protein is Eukaryotic translation initiation factor 3 subunit B.